The chain runs to 289 residues: Glucanase inhibitor protein 2 (289 aa).

The first 19 residues, Met-1–Ala-19, serve as a signal peptide directing secretion. The region spanning Ile-29–Lys-257 is the Peptidase S1 domain. A disulfide bridge connects residues Cys-56 and Cys-72. Asn-89, Asn-104, and Asn-109 each carry an N-linked (GlcNAc...) asparagine glycan. 2 disulfide bridges follow: Cys-180-Cys-192 and Cys-202-Cys-233.

The protein belongs to the peptidase S1 family.

The protein localises to the secreted. In terms of biological role, secreted effector that suppresses host plant glucan elicitor-mediated defense responses. Targets host endoglucanases and inhibits the endoglucanase-mediated release of elicitor-active glucan oligosaccharides from P.sojae cell walls. In Phytophthora sojae (Soybean stem and root rot agent), this protein is Glucanase inhibitor protein 2.